The sequence spans 584 residues: J protein JJJ2 (584 aa).

The J domain occupies 13–77 (TYYSILGLTS…DQKLRYDRDL (65 aa)). Positions 216–312 (YSEDPNSCLG…FSSGSHDSNL (97 aa)) are disordered. A Phosphoserine modification is found at serine 229. Residues 241–253 (QQQQQQQQQQQQQ) show a composition bias toward low complexity. Residues 269–282 (KDNKESKRESRVSP) show a composition bias toward basic and acidic residues. Positions 299-312 (KTSTFSSGSHDSNL) are enriched in polar residues.

It localises to the cytoplasm. The protein localises to the nucleus. The chain is J protein JJJ2 (JJJ2) from Saccharomyces cerevisiae (strain YJM789) (Baker's yeast).